Consider the following 100-residue polypeptide: Small ribosomal subunit protein uS14c (100 aa).

The protein belongs to the universal ribosomal protein uS14 family. As to quaternary structure, part of the 30S ribosomal subunit.

It is found in the plastid. It localises to the chloroplast. In terms of biological role, binds 16S rRNA, required for the assembly of 30S particles. The sequence is that of Small ribosomal subunit protein uS14c from Chloranthus spicatus (Chulantree).